A 324-amino-acid polypeptide reads, in one-letter code: Major capsid protein (324 aa).

Residues 1–14 (MEQTQKLKLNLQHF) constitute a propeptide that is removed on maturation.

Belongs to the HK97 phage major capsid protein family. As to quaternary structure, forms homopentamers and homohexamers in the mature capsid forming a 63 nm icosahedral head with T=7 architecture. The procapsid is made up of hexamers and pentamers of this subunit. There are seven subunits in the asymmetric unit in the T=7 procapsid. Found in the procapsid with the scaffold protein in a 2:1 capsid protein:scaffold protein molecular ratio. In terms of processing, the N-terminus is cleaved by ribosomal processing protease Prp.

The protein localises to the virion. Its function is as follows. Assembles to form an icosahedral capsid, as well as procapsid, with T=7 icosahedral symmetry. The polypeptide is Major capsid protein (Staphylococcus aureus).